The sequence spans 211 residues: Urease accessory protein UreG (211 aa).

11–18 provides a ligand contact to GTP; the sequence is GPVGAGKT.

The protein belongs to the SIMIBI class G3E GTPase family. UreG subfamily. As to quaternary structure, homodimer. UreD, UreF and UreG form a complex that acts as a GTP-hydrolysis-dependent molecular chaperone, activating the urease apoprotein by helping to assemble the nickel containing metallocenter of UreC. The UreE protein probably delivers the nickel.

The protein localises to the cytoplasm. Facilitates the functional incorporation of the urease nickel metallocenter. This process requires GTP hydrolysis, probably effectuated by UreG. This chain is Urease accessory protein UreG, found in Actinobacillus pleuropneumoniae serotype 3 (strain JL03).